A 381-amino-acid polypeptide reads, in one-letter code: tRNA-cytidine(32) 2-sulfurtransferase (381 aa).

A PP-loop motif motif is present at residues 101–106 (SGGKDS). Positions 176, 179, and 267 each coordinate [4Fe-4S] cluster.

Belongs to the TtcA family. As to quaternary structure, homodimer. The cofactor is Mg(2+). [4Fe-4S] cluster is required as a cofactor.

It localises to the cytoplasm. It carries out the reaction cytidine(32) in tRNA + S-sulfanyl-L-cysteinyl-[cysteine desulfurase] + AH2 + ATP = 2-thiocytidine(32) in tRNA + L-cysteinyl-[cysteine desulfurase] + A + AMP + diphosphate + H(+). Its pathway is tRNA modification. Functionally, catalyzes the ATP-dependent 2-thiolation of cytidine in position 32 of tRNA, to form 2-thiocytidine (s(2)C32). The sulfur atoms are provided by the cysteine/cysteine desulfurase (IscS) system. The chain is tRNA-cytidine(32) 2-sulfurtransferase from Psychrobacter cryohalolentis (strain ATCC BAA-1226 / DSM 17306 / VKM B-2378 / K5).